Reading from the N-terminus, the 653-residue chain is Threonine--tRNA ligase (653 aa).

A TGS domain is found at 1–61; sequence MIKITFPDGN…NEDAEVKLFK (61 aa). Residues 243–542 form a catalytic region; that stretch reads DHRKIGKELE…LIEHTAGKFP (300 aa). Cysteine 338, histidine 389, and histidine 519 together coordinate Zn(2+).

It belongs to the class-II aminoacyl-tRNA synthetase family. As to quaternary structure, homodimer. Zn(2+) serves as cofactor.

The protein resides in the cytoplasm. The enzyme catalyses tRNA(Thr) + L-threonine + ATP = L-threonyl-tRNA(Thr) + AMP + diphosphate + H(+). Functionally, catalyzes the attachment of threonine to tRNA(Thr) in a two-step reaction: L-threonine is first activated by ATP to form Thr-AMP and then transferred to the acceptor end of tRNA(Thr). Also edits incorrectly charged L-seryl-tRNA(Thr). The polypeptide is Threonine--tRNA ligase (Porphyromonas gingivalis (strain ATCC 33277 / DSM 20709 / CIP 103683 / JCM 12257 / NCTC 11834 / 2561)).